A 545-amino-acid chain; its full sequence is Toxin BC_0920 (545 aa).

Positions 1-217 constitute an LXG domain; sequence MSLNMYLGEV…ARQAANSIEE (217 aa).

This sequence in the N-terminal section; belongs to the LXG family. In the C-terminal section; belongs to the bacterial EndoU family. In terms of assembly, probably interacts with cognate immunity protein BC_0921. The interaction inhibits the toxic activity of BC_0921.

It localises to the secreted. In terms of biological role, toxic component of an LXG toxin-immunity module. The C-terminus (residues 322-545) has RNase activity in E.coli which is neutralized by cognate immunity protein BC_0921, but not by immunity proteins specific to other toxins with the LXG domain. Degrades 5S rRNA and several tRNAs in vitro; cleavage is endonucleolytic within the anticodon loop for tRNA(GAU-Ile) and tRNA(UUC-Glu) but total for 5S rRNA and at least one other tRNA. RNase activity is suppressed by cognate immunity protein BC_0921. The sequence is that of Toxin BC_0920 from Bacillus cereus (strain ATCC 14579 / DSM 31 / CCUG 7414 / JCM 2152 / NBRC 15305 / NCIMB 9373 / NCTC 2599 / NRRL B-3711).